A 354-amino-acid chain; its full sequence is 4-hydroxy-3-methylbut-2-en-1-yl diphosphate synthase (flavodoxin) (354 aa).

4 residues coordinate [4Fe-4S] cluster: Cys265, Cys268, Cys300, and Glu307.

This sequence belongs to the IspG family. [4Fe-4S] cluster is required as a cofactor.

The catalysed reaction is (2E)-4-hydroxy-3-methylbut-2-enyl diphosphate + oxidized [flavodoxin] + H2O + 2 H(+) = 2-C-methyl-D-erythritol 2,4-cyclic diphosphate + reduced [flavodoxin]. The protein operates within isoprenoid biosynthesis; isopentenyl diphosphate biosynthesis via DXP pathway; isopentenyl diphosphate from 1-deoxy-D-xylulose 5-phosphate: step 5/6. Its function is as follows. Converts 2C-methyl-D-erythritol 2,4-cyclodiphosphate (ME-2,4cPP) into 1-hydroxy-2-methyl-2-(E)-butenyl 4-diphosphate. The polypeptide is 4-hydroxy-3-methylbut-2-en-1-yl diphosphate synthase (flavodoxin) (Hydrogenobaculum sp. (strain Y04AAS1)).